The primary structure comprises 149 residues: SsrA-binding protein (149 aa).

The interval 121–149 (GKKQHDKRADELDKDSKREAQRAMKERQR) is disordered. Basic and acidic residues predominate over residues 127 to 149 (KRADELDKDSKREAQRAMKERQR).

This sequence belongs to the SmpB family.

Its subcellular location is the cytoplasm. In terms of biological role, required for rescue of stalled ribosomes mediated by trans-translation. Binds to transfer-messenger RNA (tmRNA), required for stable association of tmRNA with ribosomes. tmRNA and SmpB together mimic tRNA shape, replacing the anticodon stem-loop with SmpB. tmRNA is encoded by the ssrA gene; the 2 termini fold to resemble tRNA(Ala) and it encodes a 'tag peptide', a short internal open reading frame. During trans-translation Ala-aminoacylated tmRNA acts like a tRNA, entering the A-site of stalled ribosomes, displacing the stalled mRNA. The ribosome then switches to translate the ORF on the tmRNA; the nascent peptide is terminated with the 'tag peptide' encoded by the tmRNA and targeted for degradation. The ribosome is freed to recommence translation, which seems to be the essential function of trans-translation. In Dechloromonas aromatica (strain RCB), this protein is SsrA-binding protein.